The primary structure comprises 243 residues: Nuclear ubiquitous casein and cyclin-dependent kinase substrate 1 (243 aa).

Positions 1 to 243 (MSRPVRNRKV…SEDEAASGED (243 aa)) are disordered. Phosphotyrosine is present on tyrosine 13. Residues serine 14 and serine 19 each carry the phosphoserine modification. Tyrosine 26 is modified (phosphotyrosine). The segment covering 35–51 (KKIRSSPREAKNKRRSG) has biased composition (basic residues). Serine 54, serine 58, serine 61, serine 73, serine 75, and serine 79 each carry phosphoserine. Residues 64 to 77 (KDVKTKKDDSHSAE) are compositionally biased toward basic and acidic residues. A compositionally biased stretch (low complexity) spans 91 to 100 (QQRQAASKAA). Over residues 111 to 124 (VGSEEEPEEDDEAP) the composition is skewed to acidic residues. Serine 113, serine 130, serine 132, and serine 144 each carry phosphoserine. Positions 132-145 (SDEDFLMEDDDDSD) are enriched in acidic residues. The span at 149-174 (SKKKNKKMVKKSKPERKEKKMPKPRL) shows a compositional bias: basic residues. Residue threonine 179 is modified to Phosphothreonine. Position 181 is a phosphoserine (serine 181). A compositionally biased stretch (basic and acidic residues) spans 197-206 (TSKEKTPSPK). Threonine 202 carries the post-translational modification Phosphothreonine. A phosphoserine mark is found at serine 204, serine 214, serine 223, serine 229, serine 234, and serine 240. The segment covering 232-243 (EGSEDEAASGED) has biased composition (acidic residues).

In terms of assembly, does not interact with RAD51. Post-translationally, phosphorylated in an ATM-dependent manner in response to DNA damage. Phosphorylated by CDK1 and casein kinase.

Its subcellular location is the nucleus. The protein resides in the chromosome. In terms of biological role, chromatin-associated protein involved in DNA repair by promoting homologous recombination (HR). Binds double-stranded DNA (dsDNA) and secondary DNA structures, such as D-loop structures, but with less affinity than RAD51AP1. This is Nuclear ubiquitous casein and cyclin-dependent kinase substrate 1 from Rattus norvegicus (Rat).